The chain runs to 552 residues: uncharacterized protein (552 aa).

This sequence belongs to the transposase 25 family.

This is an uncharacterized protein from Sinorhizobium fredii (strain NBRC 101917 / NGR234).